We begin with the raw amino-acid sequence, 166 residues long: uncharacterized protein (166 aa).

Residues 73–88 (SKLNNNNNSNNNNKMA) are compositionally biased toward low complexity. Disordered regions lie at residues 73–101 (SKLNNNNNSNNNNKMAVDNKDNKDNEKDK) and 126–166 (PQSS…EFNN). The segment covering 89–101 (VDNKDNKDNEKDK) has biased composition (basic and acidic residues). The span at 134-154 (SPTHKSPSSSPKTISPVKVSP) shows a compositional bias: low complexity. Positions 155–166 (TSSPIKNPEFNN) are enriched in polar residues.

This is an uncharacterized protein from Dictyostelium discoideum (Social amoeba).